A 535-amino-acid polypeptide reads, in one-letter code: Signal transduction histidine-protein kinase AfsQ2 (535 aa).

Residues 1–30 (MTREHQGGTRGLAAARKGFWSGLRFTSLRL) are Cytoplasmic-facing. A helical transmembrane segment spans residues 31-52 (RLVLVFGLVALTAAVSASGIAY). Residues 53 to 198 (WLNREAVLTR…SLEPEAKDLN (146 aa)) are Extracellular-facing. Residues 199–219 (SLAWSLGIATALALLGSALLA) traverse the membrane as a helical segment. The Cytoplasmic segment spans residues 220-535 (QALATTVLKP…DRGKDAKGQV (316 aa)). The 53-residue stretch at 224–276 (TTVLKPVHRLGVAARRLGEGKLDTRLRVSGTDELADLSRTFNSAAENLEKRVA) folds into the HAMP domain. In terms of domain architecture, Histidine kinase spans 291 to 510 (DMSHELRTPL…VFTLRLPQDP (220 aa)). Position 294 is a phosphohistidine (H294). The segment at 493–535 (ENAPEGGAVFTLRLPQDPSPPADEDGGPDEETEDRGKDAKGQV) is disordered. Residues 514–525 (ADEDGGPDEETE) are compositionally biased toward acidic residues. A compositionally biased stretch (basic and acidic residues) spans 526-535 (DRGKDAKGQV).

The protein localises to the cell membrane. The catalysed reaction is ATP + protein L-histidine = ADP + protein N-phospho-L-histidine.. In terms of biological role, forms part of a two-component regulatory system AfsQ1/AfsQ2 involved in secondary metabolism. May activate AfsQ1 by phosphorylation. This is Signal transduction histidine-protein kinase AfsQ2 (afsQ2) from Streptomyces coelicolor (strain ATCC BAA-471 / A3(2) / M145).